A 434-amino-acid polypeptide reads, in one-letter code: ATP-dependent RNA helicase RhlB (434 aa).

The short motif at 9 to 37 (QKFADLGLEPQVLDGLNAKGFINCTPIQA) is the Q motif element. Residues 40 to 219 (LPVLLAGQDI…FEHMQEPEHV (180 aa)) enclose the Helicase ATP-binding domain. 53-60 (AQTGTGKT) lines the ATP pocket. Positions 165-168 (DEAD) match the DEAD box motif. The Helicase C-terminal domain occupies 245–390 (ALLQTLIEEE…QSDYDTSALL (146 aa)). The tract at residues 394–434 (PAPIRLQRRPPQNRRNGSNNGQRQSGNRKHSRPRPPRSPQA) is disordered. A compositionally biased stretch (low complexity) spans 406–418 (NRRNGSNNGQRQS). A compositionally biased stretch (basic residues) spans 419–428 (GNRKHSRPRP).

It belongs to the DEAD box helicase family. RhlB subfamily. Component of the RNA degradosome, which is a multiprotein complex involved in RNA processing and mRNA degradation.

It is found in the cytoplasm. The enzyme catalyses ATP + H2O = ADP + phosphate + H(+). Its function is as follows. DEAD-box RNA helicase involved in RNA degradation. Has RNA-dependent ATPase activity and unwinds double-stranded RNA. The protein is ATP-dependent RNA helicase RhlB of Aliivibrio salmonicida (strain LFI1238) (Vibrio salmonicida (strain LFI1238)).